The following is a 713-amino-acid chain: MLNFFAAAPKGFEYSLAQELTEFGATEIKESVAGVYFTAPLALAYRITLWTRLASRIVLVIYKGPCESAEQLYNAAYCIDWSAHFSNRNTFSIDFHGTGGFINNTQFGALKIKDAIVDRFRDDGDARPNVARIDADIKIDAHFRNGVITIAMNFSGPSLHQRGYRSTTGEAPLKENLAANMLVRSGWKAAPTTLLDPFCGSGTVLIEAALMAADIAPGLQRSRFGFEHWRRHDKATWHEILEEAKARASLGVKRCDVKFYGSDIDSRLVALAKRNAQNAGVLELIDFKVANALNVEPPAGEGYLITNPPYGERLGSVSELLQLYYQLGDKFKKEFGGWKVAMLCSDIELISALKLKADKQMKMFNGALECAFNLYTLHAQSTRRDTPVLPEGVDIADIAPAFANRIKKNAKQLEKWAKKEGIDSYRLYDADIPEYNVAVDRYLDHIVVQEYMAPASIPEAVTKRRLSDVLLALPAAIGVDPHKITMKTRERQKGTNQYQKLDERKLELITTEYGAKFKLNLTGYLDTGLFLDHRLTRRLVGQKSKGRRVLNLFSYTGSASVHAALGGAKSVTTVDMSNTYLAWAKENFALNDLSGKQYEFVQADCLQWIRDSALDKSAQYDLIFIDPPTFSNSKRMEDSFDVQRDHVNLLGMLIKLLSPNGEIVFSNNKRKFKMDTETLAKMKIKVENIDDLTLPMDYKRNPHIHNTWLITHA.

Positions 43–154 constitute a THUMP domain; sequence LAYRITLWTR…NGVITIAMNF (112 aa).

This sequence belongs to the methyltransferase superfamily. RlmKL family.

It is found in the cytoplasm. The catalysed reaction is guanosine(2445) in 23S rRNA + S-adenosyl-L-methionine = N(2)-methylguanosine(2445) in 23S rRNA + S-adenosyl-L-homocysteine + H(+). The enzyme catalyses guanosine(2069) in 23S rRNA + S-adenosyl-L-methionine = N(2)-methylguanosine(2069) in 23S rRNA + S-adenosyl-L-homocysteine + H(+). In terms of biological role, specifically methylates the guanine in position 2445 (m2G2445) and the guanine in position 2069 (m7G2069) of 23S rRNA. The polypeptide is Ribosomal RNA large subunit methyltransferase K/L (Shewanella sp. (strain MR-7)).